The following is a 589-amino-acid chain: Type I restriction enzyme EcoAI specificity subunit (589 aa).

It belongs to the type-I restriction system S methylase family. The type I restriction/modification system is composed of three polypeptides R, M and S. The restriction enzyme has stoichiometry R(2)M(2)S(1) while the methyltransferase is M(2)S(1).

In terms of biological role, the specificity (S) subunit of a type I restriction enzyme; this subunit dictates DNA sequence specificity. The M and S subunits together form a methyltransferase (MTase) that methylates A-2 on the top strand and A-3 on the bottom strand of the sequence 5'-GAGN(7)GTCA-3'. In the presence of the R subunit the complex can also act as an endonuclease, binding to the same target sequence but cutting the DNA some distance from this site. Whether the DNA is cut or modified depends on the methylation state of the target sequence. When the target site is unmodified, the DNA is cut. When the target site is hemimethylated, the complex acts as a maintenance MTase modifying the DNA so that both strands become methylated. After locating a non-methylated recognition site, the enzyme complex serves as a molecular motor that translocates DNA in an ATP-dependent manner until a collision occurs that triggers cleavage. The protein is Type I restriction enzyme EcoAI specificity subunit of Escherichia coli.